We begin with the raw amino-acid sequence, 201 residues long: Phosphatidylglycerophosphatase and protein-tyrosine phosphatase 1 (201 aa).

The N-terminal 27 residues, 1–27, are a transit peptide targeting the mitochondrion; that stretch reads MAATALLEAGLARVLFYPTLLYTLFRG. Positions 37-188 constitute a Tyrosine-protein phosphatase domain; sequence WYHRIDPTVL…LKEFHKQITA (152 aa). The Phosphocysteine intermediate role is filled by Cys-132.

It belongs to the protein-tyrosine phosphatase family. Non-receptor class dual specificity subfamily. As to quaternary structure, interacts with STYXL1; the interaction inhibits PTPMT1 catalytic activity.

The protein resides in the mitochondrion inner membrane. It carries out the reaction a 1,2-diacyl-sn-glycero-3-phospho-(1'-sn-glycero-3'-phosphate) + H2O = a 1,2-diacyl-sn-glycero-3-phospho-(1'-sn-glycerol) + phosphate. The enzyme catalyses O-phospho-L-tyrosyl-[protein] + H2O = L-tyrosyl-[protein] + phosphate. It catalyses the reaction O-phospho-L-seryl-[protein] + H2O = L-seryl-[protein] + phosphate. The catalysed reaction is O-phospho-L-threonyl-[protein] + H2O = L-threonyl-[protein] + phosphate. It carries out the reaction 1,2-di-(9Z-octadecenoyl)-sn-glycero-3-phospho-(1'-sn-glycerol-3'-phosphate) + H2O = 1,2-di-(9Z-octadecenoyl)-sn-glycero-3-phospho-(1'-sn-glycerol) + phosphate. The enzyme catalyses 1,2-dioctanoyl-sn-glycero-3-phospho-(1D-myo-inositol-5-phosphate) + H2O = 1,2-dioctanoyl-sn-glycero-3-phospho-(1D-myo-inositol) + phosphate. It catalyses the reaction a 1-acyl-2-hexanoyl-sn-glycero-3-phospho-(1D-myo-inositol-5-phosphate) + H2O = a 1-acyl-2-hexanoyl-sn-glycero-3-phospho-(1D-myo-inositol) + phosphate. The catalysed reaction is 1,2-dibutyryl-sn-glycero-3-phospho-(1D-myo-inositol-5-phosphate) + H2O = 1,2-dibutyryl-sn-glycero-3-phospho-(1D-myo-inositol) + phosphate. Its pathway is phospholipid metabolism; phosphatidylglycerol biosynthesis; phosphatidylglycerol from CDP-diacylglycerol: step 2/2. Its function is as follows. Lipid phosphatase which dephosphorylates phosphatidylglycerophosphate (PGP) to phosphatidylglycerol (PG). PGP is an essential intermediate in the biosynthetic pathway of cardiolipin, a mitochondrial-specific phospholipid regulating the membrane integrity and activities of the organelle. Has also been shown to display phosphatase activity toward phosphoprotein substrates, specifically mediates dephosphorylation of mitochondrial proteins, thereby playing an essential role in ATP production. Has probably a preference for proteins phosphorylated on Ser and/or Thr residues compared to proteins phosphorylated on Tyr residues. Probably involved in regulation of insulin secretion in pancreatic beta cells. May prevent intrinsic apoptosis, probably by regulating mitochondrial membrane integrity. This is Phosphatidylglycerophosphatase and protein-tyrosine phosphatase 1 from Homo sapiens (Human).